The chain runs to 347 residues: NADH-quinone oxidoreductase subunit H (347 aa).

The next 9 helical transmembrane spans lie at 13–33 (LIIA…VAYL), 50–70 (PNVV…KFVF), 82–102 (GVFL…WAVI), 115–135 (VGIL…IMGG), 161–181 (IGFV…TDIV), 198–218 (FLDW…ISAL), 248–268 (FLLF…LMTV), 286–306 (VPGI…FAMV), and 325–345 (VFLP…KVFG).

The protein belongs to the complex I subunit 1 family. In terms of assembly, NDH-1 is composed of 14 different subunits. Subunits NuoA, H, J, K, L, M, N constitute the membrane sector of the complex.

The protein localises to the cell inner membrane. The enzyme catalyses a quinone + NADH + 5 H(+)(in) = a quinol + NAD(+) + 4 H(+)(out). In terms of biological role, NDH-1 shuttles electrons from NADH, via FMN and iron-sulfur (Fe-S) centers, to quinones in the respiratory chain. The immediate electron acceptor for the enzyme in this species is believed to be ubiquinone. Couples the redox reaction to proton translocation (for every two electrons transferred, four hydrogen ions are translocated across the cytoplasmic membrane), and thus conserves the redox energy in a proton gradient. This subunit may bind ubiquinone. This chain is NADH-quinone oxidoreductase subunit H, found in Brucella abortus (strain 2308).